We begin with the raw amino-acid sequence, 145 residues long: Transcriptional anti-antiactivator ExsC (145 aa).

In terms of assembly, homodimer. Interacts with ExsE. Interacts directly with ExsD to form a heterotetrameric complex.

The protein resides in the cytoplasm. Its activity is regulated as follows. In the absence of inducing signals, ExsE interacts with and inhibits ExsC activity. Part of the regulatory cascade that plays a role in the transcriptional regulation of the type III secretion system (T3SS). Interacts with antiactivator ExsD to inhibit its activity leading to ExsA-mediated transcription. The sequence is that of Transcriptional anti-antiactivator ExsC (exsC) from Pseudomonas aeruginosa (strain ATCC 15692 / DSM 22644 / CIP 104116 / JCM 14847 / LMG 12228 / 1C / PRS 101 / PAO1).